We begin with the raw amino-acid sequence, 233 residues long: Small ribosomal subunit protein uS2 (233 aa).

Belongs to the universal ribosomal protein uS2 family.

This Clostridium beijerinckii (strain ATCC 51743 / NCIMB 8052) (Clostridium acetobutylicum) protein is Small ribosomal subunit protein uS2.